We begin with the raw amino-acid sequence, 383 residues long: Mannan endo-1,4-beta-mannosidase (383 aa).

The first 35 residues, 1–35 (MRNARSTLITTAGMAFAVLGLLFALAGPSAGRAEA), serve as a signal peptide directing secretion. Residues 339-377 (GGSTGGTAPNGYPYCVNGGASDPDGDGWGWENSRSCVVR) form the CBM10 domain.

The protein belongs to the glycosyl hydrolase 5 (cellulase A) family. In terms of assembly, monomer.

The enzyme catalyses Random hydrolysis of (1-&gt;4)-beta-D-mannosidic linkages in mannans, galactomannans and glucomannans.. The chain is Mannan endo-1,4-beta-mannosidase (manA) from Streptomyces lividans.